The chain runs to 364 residues: 4-hydroxythreonine-4-phosphate dehydrogenase (364 aa).

2 residues coordinate substrate: His148 and Thr149. A divalent metal cation contacts are provided by His177, His216, and His301. The substrate site is built by Lys309, Asn318, and Arg327.

The protein belongs to the PdxA family. In terms of assembly, homodimer. Zn(2+) is required as a cofactor. Requires Mg(2+) as cofactor. The cofactor is Co(2+).

Its subcellular location is the cytoplasm. It carries out the reaction 4-(phosphooxy)-L-threonine + NAD(+) = 3-amino-2-oxopropyl phosphate + CO2 + NADH. It participates in cofactor biosynthesis; pyridoxine 5'-phosphate biosynthesis; pyridoxine 5'-phosphate from D-erythrose 4-phosphate: step 4/5. Its function is as follows. Catalyzes the NAD(P)-dependent oxidation of 4-(phosphooxy)-L-threonine (HTP) into 2-amino-3-oxo-4-(phosphooxy)butyric acid which spontaneously decarboxylates to form 3-amino-2-oxopropyl phosphate (AHAP). The polypeptide is 4-hydroxythreonine-4-phosphate dehydrogenase (Campylobacter jejuni subsp. jejuni serotype O:23/36 (strain 81-176)).